The following is a 1295-amino-acid chain: Phosphoribosylformylglycinamidine synthase (1295 aa).

Residues 305–327 form a disordered region; the sequence is WPGAATGSGGEIRDEGATGRGAK. Residues 307-318 and Ala-678 contribute to the ATP site; that span reads GAATGSGGEIRD. 3 residues coordinate Mg(2+): Glu-718, Asn-722, and Asp-884. Ser-886 contributes to the ATP binding site. One can recognise a Glutamine amidotransferase type-1 domain in the interval 1042–1295; it reads VAVLREQGVN…IFRNARKQLG (254 aa). The Nucleophile role is filled by Cys-1135. Residues His-1260 and Glu-1262 contribute to the active site.

It in the N-terminal section; belongs to the FGAMS family. Monomer.

It is found in the cytoplasm. The enzyme catalyses N(2)-formyl-N(1)-(5-phospho-beta-D-ribosyl)glycinamide + L-glutamine + ATP + H2O = 2-formamido-N(1)-(5-O-phospho-beta-D-ribosyl)acetamidine + L-glutamate + ADP + phosphate + H(+). It participates in purine metabolism; IMP biosynthesis via de novo pathway; 5-amino-1-(5-phospho-D-ribosyl)imidazole from N(2)-formyl-N(1)-(5-phospho-D-ribosyl)glycinamide: step 1/2. Phosphoribosylformylglycinamidine synthase involved in the purines biosynthetic pathway. Catalyzes the ATP-dependent conversion of formylglycinamide ribonucleotide (FGAR) and glutamine to yield formylglycinamidine ribonucleotide (FGAM) and glutamate. The chain is Phosphoribosylformylglycinamidine synthase from Escherichia coli (strain UTI89 / UPEC).